The chain runs to 210 residues: T-cell surface glycoprotein CD8 beta-2 chain (210 aa).

An N-terminal signal peptide occupies residues 1–18 (MRPRLWLLLAAQLTVLHG). An Ig-like V-type domain is found at 19–132 (NSVLQQTPAY…ELTFGKGTQL (114 aa)). The Extracellular portion of the chain corresponds to 19–170 (NSVLQQTPAY…ETQKGPLCSP (152 aa)). Residues Cys-41 and Cys-116 are joined by a disulfide bond. N-linked (GlcNAc...) asparagine glycosylation occurs at Asn-102. Residues 171 to 191 (VTLGLLVAGVLVLLVSLGVAM) form a helical membrane-spanning segment. The Cytoplasmic portion of the chain corresponds to 192 to 210 (HLCCRRRRARLRFMKQFYK).

In general heterodimer of an alpha and a beta chain linked by two disulfide bonds.

The protein localises to the cell membrane. Identifies cytotoxic/suppressor T-cells that interact with MHC class I bearing targets. CD8 is thought to play a role in the process of T-cell mediated killing. This chain is T-cell surface glycoprotein CD8 beta-2 chain, found in Homo sapiens (Human).